We begin with the raw amino-acid sequence, 393 residues long: NAD(P)H-quinone oxidoreductase subunit H, chloroplastic (393 aa).

Belongs to the complex I 49 kDa subunit family. As to quaternary structure, NDH is composed of at least 16 different subunits, 5 of which are encoded in the nucleus.

It localises to the plastid. Its subcellular location is the chloroplast thylakoid membrane. The catalysed reaction is a plastoquinone + NADH + (n+1) H(+)(in) = a plastoquinol + NAD(+) + n H(+)(out). It catalyses the reaction a plastoquinone + NADPH + (n+1) H(+)(in) = a plastoquinol + NADP(+) + n H(+)(out). Its function is as follows. NDH shuttles electrons from NAD(P)H:plastoquinone, via FMN and iron-sulfur (Fe-S) centers, to quinones in the photosynthetic chain and possibly in a chloroplast respiratory chain. The immediate electron acceptor for the enzyme in this species is believed to be plastoquinone. Couples the redox reaction to proton translocation, and thus conserves the redox energy in a proton gradient. This Platanus occidentalis (Sycamore) protein is NAD(P)H-quinone oxidoreductase subunit H, chloroplastic.